A 470-amino-acid chain; its full sequence is Na(+)-translocating NADH-quinone reductase subunit A (470 aa).

Belongs to the NqrA family. In terms of assembly, composed of six subunits; NqrA, NqrB, NqrC, NqrD, NqrE and NqrF.

It carries out the reaction a ubiquinone + n Na(+)(in) + NADH + H(+) = a ubiquinol + n Na(+)(out) + NAD(+). Functionally, NQR complex catalyzes the reduction of ubiquinone-1 to ubiquinol by two successive reactions, coupled with the transport of Na(+) ions from the cytoplasm to the periplasm. NqrA to NqrE are probably involved in the second step, the conversion of ubisemiquinone to ubiquinol. In Chlamydia caviae (strain ATCC VR-813 / DSM 19441 / 03DC25 / GPIC) (Chlamydophila caviae), this protein is Na(+)-translocating NADH-quinone reductase subunit A.